The primary structure comprises 685 residues: Probable transcriptional regulator SLK3 (685 aa).

Disordered regions lie at residues 25–66 (NLPG…ENSY) and 108–129 (LQQQRVRQHQQMLQSMSPSQRL). The segment covering 39–56 (QHLPQQQQRQLLEQQAGQ) has biased composition (low complexity). The dimerization stretch occupies residues 176 to 423 (PAENCITYWR…EHKVGPLEGL (248 aa)). Residues 185 to 199 (RKFVAEYFSPRAKQR) carry the Nuclear localization signal motif. Residues 447 to 459 (GNSGAMSGPAQAQ) are compositionally biased toward polar residues. 3 disordered regions span residues 447–491 (GNSG…MNGS), 512–591 (NNQN…NTQE), and 611–658 (QQQA…NNLP). The span at 460-471 (MTLSSGTMSGST) shows a compositional bias: low complexity. Residues 512-524 (NNQNSNTGNQEGF) show a composition bias toward polar residues. Residues 525-543 (SSQNPTLNSNQSPSSSSQQ) show a composition bias toward low complexity. Polar residues-rich tracts occupy residues 544-588 (RENL…SHGN), 611-636 (QQQAFPGQSGSNNNTERNTTASTSNI), and 645-658 (RINSFKASSNNNLP).

This sequence belongs to the adn1/SEU family.

It is found in the nucleus. In terms of biological role, probable transcription regulator that functions in the development of the carpel margin meristem similarly to SEUSS (SEU). In association with SEU, supports organ development from meristematic regions by facilitating auxin response and thus organ initiation, and by sustaining meristematic potential through the maintenance of PHABULOSA expression. The protein is Probable transcriptional regulator SLK3 (SLK3) of Arabidopsis thaliana (Mouse-ear cress).